A 430-amino-acid chain; its full sequence is Enolase (430 aa).

Residue Q168 coordinates (2R)-2-phosphoglycerate. E210 serves as the catalytic Proton donor. Mg(2+)-binding residues include D247, E288, and D315. 4 residues coordinate (2R)-2-phosphoglycerate: K340, R369, S370, and K391. K340 functions as the Proton acceptor in the catalytic mechanism.

The protein belongs to the enolase family. Mg(2+) serves as cofactor.

The protein localises to the cytoplasm. It is found in the secreted. Its subcellular location is the cell surface. The enzyme catalyses (2R)-2-phosphoglycerate = phosphoenolpyruvate + H2O. It functions in the pathway carbohydrate degradation; glycolysis; pyruvate from D-glyceraldehyde 3-phosphate: step 4/5. Its function is as follows. Catalyzes the reversible conversion of 2-phosphoglycerate (2-PG) into phosphoenolpyruvate (PEP). It is essential for the degradation of carbohydrates via glycolysis. This Rippkaea orientalis (strain PCC 8801 / RF-1) (Cyanothece sp. (strain PCC 8801)) protein is Enolase.